The primary structure comprises 443 residues: Tubulin beta chain (443 aa).

Positions 11, 69, 138, 142, 143, 144, 204, and 226 each coordinate GTP. E69 serves as a coordination point for Mg(2+). The segment at 421–443 (EYQQYQDASAEEEGEFGEEEEEN) is disordered. Over residues 429–443 (SAEEEGEFGEEEEEN) the composition is skewed to acidic residues.

It belongs to the tubulin family. As to quaternary structure, dimer of alpha and beta chains. A typical microtubule is a hollow water-filled tube with an outer diameter of 25 nm and an inner diameter of 15 nM. Alpha-beta heterodimers associate head-to-tail to form protofilaments running lengthwise along the microtubule wall with the beta-tubulin subunit facing the microtubule plus end conferring a structural polarity. Microtubules usually have 13 protofilaments but different protofilament numbers can be found in some organisms and specialized cells. Mg(2+) is required as a cofactor.

Its subcellular location is the cytoplasm. It localises to the cytoskeleton. Tubulin is the major constituent of microtubules, a cylinder consisting of laterally associated linear protofilaments composed of alpha- and beta-tubulin heterodimers. Microtubules grow by the addition of GTP-tubulin dimers to the microtubule end, where a stabilizing cap forms. Below the cap, tubulin dimers are in GDP-bound state, owing to GTPase activity of alpha-tubulin. This chain is Tubulin beta chain (TUBB1), found in Polytomella agilis (Quadriflagellate alga).